The following is a 389-amino-acid chain: Sterol methyltransferase-like 2 (389 aa).

A helical transmembrane segment spans residues 25-45; the sequence is LSWKGAVGLVAATGIGYVLII.

This sequence belongs to the class I-like SAM-binding methyltransferase superfamily. Erg6/SMT family.

The protein resides in the microsome membrane. Its function is as follows. Unable to convert squalene, botryococcene, cycloartenol, zymosterol or lanosterol to mono-, di-, tri- or tetramethylated derivatives. This chain is Sterol methyltransferase-like 2 (SMT-2), found in Botryococcus braunii (Green alga).